We begin with the raw amino-acid sequence, 1468 residues long: DNA-directed RNA polymerase subunit beta (1468 aa).

Belongs to the RNA polymerase beta chain family. In terms of assembly, the RNAP catalytic core consists of 2 alpha, 1 beta, 1 beta' and 1 omega subunit. When a sigma factor is associated with the core the holoenzyme is formed, which can initiate transcription.

The catalysed reaction is RNA(n) + a ribonucleoside 5'-triphosphate = RNA(n+1) + diphosphate. DNA-dependent RNA polymerase catalyzes the transcription of DNA into RNA using the four ribonucleoside triphosphates as substrates. This chain is DNA-directed RNA polymerase subunit beta, found in Aquifex aeolicus (strain VF5).